The following is a 421-amino-acid chain: ATP-dependent RNA helicase RhlB (421 aa).

The Q motif motif lies at 9-37 (QKFSDFALHPQVVEALEKKGFYNCTPIQA). Residues 40–219 (LPLTLAGRDV…FEQMNNAEYV (180 aa)) enclose the Helicase ATP-binding domain. 53-60 (AQTGTGKT) is an ATP binding site. A DEAD box motif is present at residues 165-168 (DEAD). The 146-residue stretch at 245–390 (RLLQTLIEEE…VSKYNPEALM (146 aa)) folds into the Helicase C-terminal domain. The segment at 396-421 (PLRLTRSRPGNGPRRAGAPRNRRRSG) is disordered. The segment covering 402–414 (SRPGNGPRRAGAP) has biased composition (low complexity).

This sequence belongs to the DEAD box helicase family. RhlB subfamily. In terms of assembly, component of the RNA degradosome, which is a multiprotein complex involved in RNA processing and mRNA degradation.

Its subcellular location is the cytoplasm. It carries out the reaction ATP + H2O = ADP + phosphate + H(+). DEAD-box RNA helicase involved in RNA degradation. Has RNA-dependent ATPase activity and unwinds double-stranded RNA. This is ATP-dependent RNA helicase RhlB from Salmonella arizonae (strain ATCC BAA-731 / CDC346-86 / RSK2980).